A 313-amino-acid polypeptide reads, in one-letter code: Formate-nitrite transporter (313 aa).

The Cytoplasmic portion of the chain corresponds to 1-46 (MTKGSKYTIDPISVKTACTSEESYIRCVEYGKGKAHYPNLSLLAKA). The chain crosses the membrane as a helical span at residues 47 to 67 (ILAGVFVGVCAHASGIAGGHF). The Extracellular segment spans residues 68-77 (YYHKLREHVG). The chain crosses the membrane as a helical span at residues 78-98 (ISMSAFVYGFTFPIAFLCIIA). Topologically, residues 99 to 127 (TGSDLFTGNTLAVTTALLQRKVTLLEYLR) are cytoplasmic. A helical transmembrane segment spans residues 128-148 (VMSISLFGNYVGAVSFAFFVS). Over 149 to 184 (HLSGAFKKHEEIGKNHIFQFLNDIAEKKVSHTFVQC) the chain is Extracellular. A helical membrane pass occupies residues 185–205 (VCLAIGCNIFVCLAVYFVLTI). Topologically, residues 206–210 (KDGSG) are cytoplasmic. A helical transmembrane segment spans residues 211–231 (MVFSVFFAVYAFAIAGYEHII). The Extracellular portion of the chain corresponds to 232–256 (ANMYTLNLALMIEANVDWTKVYVDN). Residues 257–277 (LLPTLIGNYIAGAIVLACPLF) form a helical membrane-spanning segment. Residues 278–313 (YIYRHSYSDYEKTRGDGGNSGLKSLSIEMQNGSSGR) lie on the Cytoplasmic side of the membrane. Positions 290-313 (TRGDGGNSGLKSLSIEMQNGSSGR) are disordered. Polar residues predominate over residues 298–313 (GLKSLSIEMQNGSSGR).

This sequence belongs to the FNT transporter (TC 1.A.16) family. As to quaternary structure, homopentamer.

The protein localises to the cell membrane. The protein resides in the vacuole membrane. It carries out the reaction (S)-lactate(in) + H(+)(in) = (S)-lactate(out) + H(+)(out). The catalysed reaction is formate(in) + H(+)(in) = formate(out) + H(+)(out). The enzyme catalyses pyruvate(out) + H(+)(out) = pyruvate(in) + H(+)(in). It catalyses the reaction acetate(out) + H(+)(out) = acetate(in) + H(+)(in). With respect to regulation, inhibited by the Malaria Box compound MMV007839 and its derivatives BH296 and BH267.meta. In terms of biological role, monocarboxylate-proton symporter that mediates the efflux of the waste product lactate in the intraerythrocytic parasites; active in acidic-to-neutral pH range. Transports L-lactate. This Plasmodium vivax protein is Formate-nitrite transporter.